The sequence spans 298 residues: Aspartate carbamoyltransferase catalytic subunit (298 aa).

Positions 50 and 51 each coordinate carbamoyl phosphate. An L-aspartate-binding site is contributed by K79. 3 residues coordinate carbamoyl phosphate: R100, H128, and Q131. Residues R160 and R221 each coordinate L-aspartate. Carbamoyl phosphate contacts are provided by L260 and P261.

It belongs to the aspartate/ornithine carbamoyltransferase superfamily. ATCase family. In terms of assembly, heterooligomer of catalytic and regulatory chains.

The catalysed reaction is carbamoyl phosphate + L-aspartate = N-carbamoyl-L-aspartate + phosphate + H(+). The protein operates within pyrimidine metabolism; UMP biosynthesis via de novo pathway; (S)-dihydroorotate from bicarbonate: step 2/3. Catalyzes the condensation of carbamoyl phosphate and aspartate to form carbamoyl aspartate and inorganic phosphate, the committed step in the de novo pyrimidine nucleotide biosynthesis pathway. The polypeptide is Aspartate carbamoyltransferase catalytic subunit (Methanoculleus marisnigri (strain ATCC 35101 / DSM 1498 / JR1)).